We begin with the raw amino-acid sequence, 400 residues long: Phosphoglycerate kinase (400 aa).

Substrate-binding positions include 21–23 (DFN), R36, 59–62 (HLGR), R119, and R160. Residues K211, E329, and 356–359 (GGDS) contribute to the ATP site.

It belongs to the phosphoglycerate kinase family. In terms of assembly, monomer.

It is found in the cytoplasm. The enzyme catalyses (2R)-3-phosphoglycerate + ATP = (2R)-3-phospho-glyceroyl phosphate + ADP. Its pathway is carbohydrate degradation; glycolysis; pyruvate from D-glyceraldehyde 3-phosphate: step 2/5. This Levilactobacillus brevis (strain ATCC 367 / BCRC 12310 / CIP 105137 / JCM 1170 / LMG 11437 / NCIMB 947 / NCTC 947) (Lactobacillus brevis) protein is Phosphoglycerate kinase.